The following is a 142-amino-acid chain: Large ribosomal subunit protein uL11 (142 aa).

It belongs to the universal ribosomal protein uL11 family. Part of the ribosomal stalk of the 50S ribosomal subunit. Interacts with L10 and the large rRNA to form the base of the stalk. L10 forms an elongated spine to which L12 dimers bind in a sequential fashion forming a multimeric L10(L12)X complex. One or more lysine residues are methylated.

In terms of biological role, forms part of the ribosomal stalk which helps the ribosome interact with GTP-bound translation factors. The chain is Large ribosomal subunit protein uL11 from Rhizobium meliloti (strain 1021) (Ensifer meliloti).